A 122-amino-acid chain; its full sequence is Large ribosomal subunit protein uL14 (122 aa).

It belongs to the universal ribosomal protein uL14 family. In terms of assembly, part of the 50S ribosomal subunit. Forms a cluster with proteins L3 and L19. In the 70S ribosome, L14 and L19 interact and together make contacts with the 16S rRNA in bridges B5 and B8.

Binds to 23S rRNA. Forms part of two intersubunit bridges in the 70S ribosome. In Lactococcus lactis subsp. lactis (strain IL1403) (Streptococcus lactis), this protein is Large ribosomal subunit protein uL14.